A 1208-amino-acid chain; its full sequence is DNA-directed RNA polymerase subunit beta (1208 aa).

Belongs to the RNA polymerase beta chain family. In terms of assembly, the RNAP catalytic core consists of 2 alpha, 1 beta, 1 beta' and 1 omega subunit. When a sigma factor is associated with the core the holoenzyme is formed, which can initiate transcription.

It catalyses the reaction RNA(n) + a ribonucleoside 5'-triphosphate = RNA(n+1) + diphosphate. Its function is as follows. DNA-dependent RNA polymerase catalyzes the transcription of DNA into RNA using the four ribonucleoside triphosphates as substrates. The protein is DNA-directed RNA polymerase subunit beta of Enterococcus faecium (Streptococcus faecium).